The primary structure comprises 433 residues: 3-phosphoshikimate 1-carboxyvinyltransferase (433 aa).

3-phosphoshikimate is bound by residues K15, S16, and R20. K15 lines the phosphoenolpyruvate pocket. G96 and R124 together coordinate phosphoenolpyruvate. The 3-phosphoshikimate site is built by S169, Q171, S195, D318, and K345. Residue Q171 coordinates phosphoenolpyruvate. D318 acts as the Proton acceptor in catalysis. R349 and R393 together coordinate phosphoenolpyruvate.

This sequence belongs to the EPSP synthase family. In terms of assembly, monomer.

The protein localises to the cytoplasm. It carries out the reaction 3-phosphoshikimate + phosphoenolpyruvate = 5-O-(1-carboxyvinyl)-3-phosphoshikimate + phosphate. Its pathway is metabolic intermediate biosynthesis; chorismate biosynthesis; chorismate from D-erythrose 4-phosphate and phosphoenolpyruvate: step 6/7. Functionally, catalyzes the transfer of the enolpyruvyl moiety of phosphoenolpyruvate (PEP) to the 5-hydroxyl of shikimate-3-phosphate (S3P) to produce enolpyruvyl shikimate-3-phosphate and inorganic phosphate. This chain is 3-phosphoshikimate 1-carboxyvinyltransferase, found in Pelodictyon phaeoclathratiforme (strain DSM 5477 / BU-1).